A 70-amino-acid polypeptide reads, in one-letter code: Insulin (70 aa).

Disulfide bonds link cysteine 7/cysteine 56, cysteine 19/cysteine 69, and cysteine 55/cysteine 60. A propeptide spans phenylalanine 33–serine 49 (c peptide).

It belongs to the insulin family. Heterodimer of a B chain and an A chain linked by two disulfide bonds.

The protein localises to the secreted. In terms of biological role, insulin decreases blood glucose concentration. It increases cell permeability to monosaccharides, amino acids and fatty acids. It accelerates glycolysis, the pentose phosphate cycle, and glycogen synthesis in liver. In Torpedo marmorata (Marbled electric ray), this protein is Insulin (ins).